Consider the following 955-residue polypeptide: uncharacterized protein (955 aa).

The 68-residue stretch at Ala23 to Ala90 folds into the Importin N-terminal domain.

This is an uncharacterized protein from Schizosaccharomyces pombe (strain 972 / ATCC 24843) (Fission yeast).